The sequence spans 217 residues: Adenylate kinase (217 aa).

10-15 lines the ATP pocket; the sequence is GAGKGT. Residues 30–59 are NMP; that stretch reads STGDMLRAAVKAGTEMGLAAKKVMDAGGLV. Residues Thr31, Arg36, 57–59, 85–88, and Gln92 contribute to the AMP site; these read GLV and GFPR. The tract at residues 122 to 159 is LID; the sequence is GRRSHPASGRTYHVKFNPPKVDGVDDVTGEPLVQRDDD. ATP-binding positions include Arg123 and 132–133; that span reads TY. Residues Arg156 and Arg167 each contribute to the AMP site. Gly203 lines the ATP pocket.

The protein belongs to the adenylate kinase family. Monomer.

Its subcellular location is the cytoplasm. It carries out the reaction AMP + ATP = 2 ADP. The protein operates within purine metabolism; AMP biosynthesis via salvage pathway; AMP from ADP: step 1/1. Functionally, catalyzes the reversible transfer of the terminal phosphate group between ATP and AMP. Plays an important role in cellular energy homeostasis and in adenine nucleotide metabolism. The protein is Adenylate kinase of Leptothrix cholodnii (strain ATCC 51168 / LMG 8142 / SP-6) (Leptothrix discophora (strain SP-6)).